The following is a 92-amino-acid chain: YcgL domain-containing protein Shewmr7_2249 (92 aa).

The 85-residue stretch at 1-85 (MLCAVYKSSR…PQVNLLAEHR (85 aa)) folds into the YcgL domain.

The chain is YcgL domain-containing protein Shewmr7_2249 from Shewanella sp. (strain MR-7).